Reading from the N-terminus, the 1106-residue chain is GYF domain-containing protein gyf-1 (1106 aa).

Residues 1 to 17 show a composition bias toward polar residues; sequence MSSVSSAEPTAQQNFNP. Disordered stretches follow at residues 1 to 50, 160 to 370, and 383 to 434; these read MSSV…GGFD, GALQ…DSTV, and KAST…SAWS. Residues 30–42 are compositionally biased toward low complexity; that stretch reads RGGSISSGNNRSS. The span at 162–180 shows a compositional bias: polar residues; it reads LQNGQSPTSRWAPKSSWNK. The segment covering 207–224 has biased composition (gly residues); that stretch reads GRGGGRIGGENGFGGATN. A compositionally biased stretch (polar residues) spans 229-243; it reads AAQNEDSPGTYQSKF. Residues 248–261 show a composition bias toward gly residues; the sequence is RGGGAGSVGRGGST. Residues 306-322 are compositionally biased toward polar residues; the sequence is VGSTSRTSTNAAPQSSE. Low complexity-rich tracts occupy residues 334–353 and 390–410; these read QRTQ…QQAQ and PPQQ…APSR. The region spanning 459–508 is the GYF domain; it reads PVQFYYMDPTETRRGPFPKDQMNVWFKAGYFTDESLRVQRGENGEYKTIG. Residues 584–746 are a coiled coil; it reads LDDHNRRLAE…ERKRAAERER (163 aa). Disordered stretches follow at residues 778–811, 909–928, 1026–1076, and 1087–1106; these read AFTG…KTAP, KNSQ…SAKV, AGGR…DGNI, and RLNK…PSRR. The span at 786–801 shows a compositional bias: polar residues; the sequence is VSPSGSEESDEWISTS. The span at 1046–1057 shows a compositional bias: low complexity; sequence SDSNSGSNSNSG.

The chain is GYF domain-containing protein gyf-1 from Caenorhabditis elegans.